Consider the following 548-residue polypeptide: Chaperonin GroEL (548 aa).

ATP is bound by residues 30–33 (TLGP), Lys-51, 87–91 (DGTTT), Gly-415, 479–481 (NAA), and Asp-495.

Belongs to the chaperonin (HSP60) family. As to quaternary structure, forms a cylinder of 14 subunits composed of two heptameric rings stacked back-to-back. Interacts with the co-chaperonin GroES.

It is found in the cytoplasm. It catalyses the reaction ATP + H2O + a folded polypeptide = ADP + phosphate + an unfolded polypeptide.. In terms of biological role, together with its co-chaperonin GroES, plays an essential role in assisting protein folding. The GroEL-GroES system forms a nano-cage that allows encapsulation of the non-native substrate proteins and provides a physical environment optimized to promote and accelerate protein folding. The polypeptide is Chaperonin GroEL (Sodalis glossinidius (strain morsitans)).